We begin with the raw amino-acid sequence, 130 residues long: Small ribosomal subunit protein uS11 (130 aa).

Belongs to the universal ribosomal protein uS11 family. In terms of assembly, part of the 30S ribosomal subunit. Interacts with proteins S7 and S18. Binds to IF-3.

In terms of biological role, located on the platform of the 30S subunit, it bridges several disparate RNA helices of the 16S rRNA. Forms part of the Shine-Dalgarno cleft in the 70S ribosome. The chain is Small ribosomal subunit protein uS11 from Campylobacter hominis (strain ATCC BAA-381 / DSM 21671 / CCUG 45161 / LMG 19568 / NCTC 13146 / CH001A).